Here is a 525-residue protein sequence, read N- to C-terminus: Protein-serine O-palmitoleoyltransferase porcupine (525 aa).

A run of 9 helical transmembrane segments spans residues 83 to 103 (VMQY…LCLL), 125 to 145 (LIIL…LAAV), 159 to 179 (GAQV…LLIW), 220 to 240 (FAYL…WVSF), 260 to 280 (LLPN…VAPA), 301 to 318 (VRSS…LLVA), 395 to 415 (SLLH…AFLA), 467 to 487 (NLAF…VLLG), and 505 to 525 (QAGY…LFIS). The active site involves histidine 398.

This sequence belongs to the membrane-bound acyltransferase family. Porcupine subfamily. Interacts with wg and Wnt5.

It localises to the endoplasmic reticulum membrane. The catalysed reaction is [Wnt protein]-L-serine + (9Z)-hexadecenoyl-CoA = [Wnt protein]-O-(9Z)-hexadecenoyl-L-serine + CoA. Protein-serine O-palmitoleoyltransferase that acts as a key regulator of the Wnt signaling pathway by mediating the attachment of palmitoleate, a 16-carbon monounsaturated fatty acid (C16:1(9Z)), to Wnt proteins. Serine palmitoleoylation of Wnt proteins is required for efficient binding to frizzled receptors. Also facilitates the glycosylation of Wnt family members, including wg and Wnt5. The cotranslational disulfide bond formation of wg competes with the N-glycosylation. Porc stimulates the post-translational N-glycosylation by anchoring wg at the ER membrane, probably through acylation. The protein is Protein-serine O-palmitoleoyltransferase porcupine of Drosophila melanogaster (Fruit fly).